The chain runs to 75 residues: uncharacterized protein (75 aa).

The first 19 residues, 1–19, serve as a signal peptide directing secretion; the sequence is MKKTAAIISACMLTFALSA. The N-palmitoyl cysteine moiety is linked to residue Cys-20. Cys-20 is lipidated: S-diacylglycerol cysteine.

This sequence to E.coli YgdR.

The protein localises to the cell membrane. This is an uncharacterized protein from Escherichia coli O6:H1 (strain CFT073 / ATCC 700928 / UPEC).